Consider the following 878-residue polypeptide: Valine--tRNA ligase (878 aa).

The 'HIGH' region motif lies at 43 to 53 (PYPTGRLHLGH). Residues 527–531 (KMSKS) carry the 'KMSKS' region motif. K530 serves as a coordination point for ATP.

It belongs to the class-I aminoacyl-tRNA synthetase family. ValS type 2 subfamily.

The protein localises to the cytoplasm. It catalyses the reaction tRNA(Val) + L-valine + ATP = L-valyl-tRNA(Val) + AMP + diphosphate. In terms of biological role, catalyzes the attachment of valine to tRNA(Val). As ValRS can inadvertently accommodate and process structurally similar amino acids such as threonine, to avoid such errors, it has a 'posttransfer' editing activity that hydrolyzes mischarged Thr-tRNA(Val) in a tRNA-dependent manner. This chain is Valine--tRNA ligase, found in Methanocaldococcus jannaschii (strain ATCC 43067 / DSM 2661 / JAL-1 / JCM 10045 / NBRC 100440) (Methanococcus jannaschii).